Here is an 87-residue protein sequence, read N- to C-terminus: U3-theraphotoxin-Hhn1a 8 (87 aa).

The first 24 residues, 1 to 24, serve as a signal peptide directing secretion; sequence MVNMKASMFLTFAGLVLLFVVCYA. A propeptide spanning residues 25–52 is cleaved from the precursor; that stretch reads SGSEEKEFPKEMLSSIFAVDNDFKQEER. 3 disulfide bridges follow: Cys54–Cys67, Cys61–Cys72, and Cys66–Cys79.

This sequence belongs to the neurotoxin 10 (Hwtx-1) family. 51 (Hntx-8) subfamily. Hntx-8 sub-subfamily. In terms of tissue distribution, expressed by the venom gland.

It localises to the secreted. Its function is as follows. Ion channel inhibitor. In Cyriopagopus hainanus (Chinese bird spider), this protein is U3-theraphotoxin-Hhn1a 8.